The sequence spans 564 residues: Formate--tetrahydrofolate ligase (564 aa).

65–72 (TPLGEGKT) serves as a coordination point for ATP.

The protein belongs to the formate--tetrahydrofolate ligase family.

It carries out the reaction (6S)-5,6,7,8-tetrahydrofolate + formate + ATP = (6R)-10-formyltetrahydrofolate + ADP + phosphate. It functions in the pathway one-carbon metabolism; tetrahydrofolate interconversion. This Roseiflexus sp. (strain RS-1) protein is Formate--tetrahydrofolate ligase.